The primary structure comprises 391 residues: Homocitrate synthase AksA (391 aa).

Positions 20–271 constitute a Pyruvate carboxyltransferase domain; the sequence is ITIYDTTLRD…DLGFNIGVLY (252 aa).

The protein belongs to the alpha-IPM synthase/homocitrate synthase family.

It catalyses the reaction acetyl-CoA + 2-oxoglutarate + H2O = (2R)-homocitrate + CoA + H(+). It carries out the reaction 2-oxoadipate + acetyl-CoA + H2O = (R)-dihomocitrate + CoA + H(+). The catalysed reaction is 2-oxoheptanedioate + acetyl-CoA + H2O = (R)-trihomocitrate + CoA + H(+). It participates in organic acid metabolism; 2-oxosuberate biosynthesis. Catalyzes the condensation of alpha-ketoglutarate and acetyl-CoA to form (R)-homocitrate. Can also catalyze the condensation of alpha-ketoadipate with acetyl-CoA to form (R)-homo(2)citrate, and the condensation of alpha-ketopimelate with acetyl-CoA to form (R)-homo(3)citrate. These reactions are part of the biosynthesis pathway of coenzyme B and biotin. The polypeptide is Homocitrate synthase AksA (aksA) (Methanothermobacter thermautotrophicus (strain ATCC 29096 / DSM 1053 / JCM 10044 / NBRC 100330 / Delta H) (Methanobacterium thermoautotrophicum)).